The sequence spans 932 residues: MDRFQTKRKTYSYNGYSNNDYGYYNNNCSNVNYNNDIHYKNNNYNNNNNNNNSNSGNNFNNNNNNNNNNNNNNNNNNNNNNNNNNYTYGNNNNNNSNNNNNNINNNGNSNNNNNNSNGSENNYFQSENQSNKDQNSYFNSSYLRNPVDNYNHNNNNHNNNAFDNNNYNTQNLGDYSYKNDGYNNDNNNNDNNNSYGDTDREKYSIEKICNENDYDSVNNNNNNRNYSNSYNNNNYNDGNNNYNSNNYNYNNNNNNNNNINNNNNSNSNSNSNSNSNSNSNSNSNSNNNNYNNYGYNNHKSNNGGNRYSDDDDNVFNNNNNNNNNNNNNYNNYNSNNNYNNDYDYNDGKRANIYSRNNSNNNNNSKSGNNNSNNYNHNNSNNNGGYNNYNNGYNNYNNNNSNNSNHNSSYNNNNNNNYNNNNNNNNNNNNNNNNNNNNNNNNNNNNNNNNNNNNNNNNNNNNNNNNNNNISNNSNNNNFNYNNDNDRNNSNGNYNNNSSNINNNNNNNNNSNSYHNSCISYSNGGSNSKNSNKNNYNNQQSNANGNHVGNSKNNESCNNTNTNIEKSNKSMWDDENDYYKVQVGEYLNNRYKVLCTVGSGTFSTVVECWDTNSSGQVAIKIVRSAKKYTEDALVEIDILRNLEKTGNSNGKYLSHCIRLLDSFLFKDHICLVFKRYGLSLYEFLKKNRYRPLPLSQIQNISKQLLTAIYSMHKLSLVHTDLKPENILLESSRFTYFDNSIPLQFKNSIDTTSNNSVDHYCHLVDTDIVVIDFGGATFENTHHTAIVCSRPYRPPEIILGMGWSYPCDIWGVGCILVELYLGYTLFDTHNNVQHLAMMEKVMGPFPNSMSNVSKKYFNDYGTLNRPQNSDEIKSMERVEGLKQLKEYFHPCHDSFFDLASRLLEYQPSKRISASDALSHPFLFETIENDCFGPI.

Over residues 1-10 (MDRFQTKRKT) the composition is skewed to basic residues. 3 disordered regions span residues 1 to 21 (MDRF…NNDY), 39 to 198 (YKNN…YGDT), and 212 to 562 (NDYD…TNTN). Composition is skewed to low complexity over residues 11 to 21 (YSYNGYSNNDY) and 39 to 123 (YKNN…ENNY). Polar residues predominate over residues 124-143 (FQSENQSNKDQNSYFNSSYL). 4 stretches are compositionally biased toward low complexity: residues 148 to 196 (DNYN…NSYG), 218 to 305 (NNNN…NGGN), 314 to 342 (VFNN…NNDY), and 351 to 562 (NIYS…TNTN). The 331-residue stretch at 590–920 (YKVLCTVGSG…ASDALSHPFL (331 aa)) folds into the Protein kinase domain. Residues 596 to 604 (VGSGTFSTV) and lysine 619 each bind ATP. Aspartate 719 (proton acceptor) is an active-site residue.

It belongs to the protein kinase superfamily. CMGC Ser/Thr protein kinase family.

It carries out the reaction L-seryl-[protein] + ATP = O-phospho-L-seryl-[protein] + ADP + H(+). The enzyme catalyses L-threonyl-[protein] + ATP = O-phospho-L-threonyl-[protein] + ADP + H(+). In Dictyostelium discoideum (Social amoeba), this protein is Probable serine/threonine-protein kinase clkA (clkA).